Reading from the N-terminus, the 930-residue chain is Endoplasmic reticulum aminopeptidase 1 (930 aa).

Over 1 to 2 the chain is Cytoplasmic; the sequence is MP. Residues 3 to 23 traverse the membrane as a helical; Signal-anchor for type II membrane protein segment; sequence SLLPLVLTFLSVSSPSWCQNS. Residues 24 to 930 are Lumenal-facing; it reads DIESLKASNG…WLQKEKPELL (907 aa). 2 N-linked (GlcNAc...) asparagine glycosylation sites follow: N59 and N143. Substrate contacts are provided by residues E172 and 306–310; that span reads GAMEN. H342 serves as a coordination point for Zn(2+). E343 is a catalytic residue. H346 and E365 together coordinate Zn(2+). A disulfide bridge links C393 with C432. 2 N-linked (GlcNAc...) asparagine glycosylation sites follow: N403 and N655. C725 and C732 are oxidised to a cystine. N-linked (GlcNAc...) asparagine glycans are attached at residues N749 and N890.

It belongs to the peptidase M1 family. As to quaternary structure, monomer. May also exist as a heterodimer; with ERAP2. Interacts with RBMX. It depends on Zn(2+) as a cofactor. N-glycosylated.

The protein localises to the endoplasmic reticulum membrane. In terms of biological role, aminopeptidase that plays a central role in peptide trimming, a step required for the generation of most HLA class I-binding peptides. Peptide trimming is essential to customize longer precursor peptides to fit them to the correct length required for presentation on MHC class I molecules. Strongly prefers substrates 9-16 residues long. Rapidly degrades 13-mer to a 9-mer and then stops. Preferentially hydrolyzes the residue Leu and peptides with a hydrophobic C-terminus, while it has weak activity toward peptides with charged C-terminus. May play a role in the inactivation of peptide hormones. May be involved in the regulation of blood pressure through the inactivation of angiotensin II and/or the generation of bradykinin in the kidney. This chain is Endoplasmic reticulum aminopeptidase 1 (Erap1), found in Mus musculus (Mouse).